Consider the following 1101-residue polypeptide: Leucine-rich repeat receptor-like serine/threonine-protein kinase At1g17230 (1101 aa).

The first 23 residues, 1–23, serve as a signal peptide directing secretion; the sequence is MRGRICFLAIVILCSFSFILVRS. The Extracellular portion of the chain corresponds to 24–734; the sequence is LNEEGRVLLE…WLINGSQRQK (711 aa). Asn39, Asn57, Asn78, and Asn97 each carry an N-linked (GlcNAc...) asparagine glycan. LRR repeat units lie at residues 66–90, 91–115, 117–137, 138–162, 163–186, 188–210, 211–234, 235–258, 260–282, 283–306, 308–329, 330–354, 355–379, 381–402, 403–426, 427–450, 451–474, 476–498, 499–522, 524–546, 548–569, 570–593, 595–618, 619–643, 644–667, and 669–692; these read LRTVTSVDLNGMNLSGTLSPLICKL, HGLRKLNVSTNFISGPIPQDLSLCR, LEVLDLCTNRFHGVIPIQLTM, IITLKKLYLCENYLFGSIPRQIGNL, SSLQELVIYSNNLTGVIPPSMAKL, QLRIIRAGRNGFSGVIPSEISGC, ESLKVLGLAENLLEGSLPKQLEKL, QNLTDLILWQNRLSGEIPPSVGNI, RLEVLALHENYFTGSIPREIGKL, TKMKRLYLYTNQLTGEIPREIGNL, DAAEIDFSENQLTGFIPKEFGH, ILNLKLLHLFENILLGPIPRELGEL, TLLEKLDLSINRLNGTIPQELQFLP, LVDLQLFDNQLEGKIPPLIGFY, SNFSVLDMSANSLSGPIPAHFCRF, QTLILLSLGSNKLSGNIPRDLKTC, KSLTKLMLGDNQLTGSLPIELFNL, NLTALELHQNWLSGNISADLGKL, KNLERLRLANNNFTGEIPPEIGNL, KIVGFNISSNQLTGHIPKELGSC, TIQRLDLSGNKFSGYIAQELGQ, LVYLEILRLSDNRLTGEIPHSFGD, TRLMELQLGGNLLSENIPVELGKL, TSLQISLNISHNNLSGTIPDSLGNL, QMLEILYLNDNKLSGEIPASIGNL, and SLLICNISNNNLVGTVPDTAVFQR. Residues Asn161 and Asn174 are each glycosylated (N-linked (GlcNAc...) asparagine). N-linked (GlcNAc...) asparagine glycosylation is found at Asn236 and Asn257. Residue Asn368 is glycosylated (N-linked (GlcNAc...) asparagine). The N-linked (GlcNAc...) asparagine glycan is linked to Asn404. N-linked (GlcNAc...) asparagine glycans are attached at residues Asn476, Asn490, Asn510, Asn521, and Asn529. Residues Asn626 and Asn631 are each glycosylated (N-linked (GlcNAc...) asparagine). Residues Asn674 and Asn728 are each glycosylated (N-linked (GlcNAc...) asparagine). Residues 735-755 traverse the membrane as a helical segment; sequence ILTITCIVIGSVFLITFLGLC. At 756–1101 the chain is on the cytoplasmic side; sequence WTIKRREPAF…LEEANSSKEI (346 aa). Thr788 and Thr796 each carry phosphothreonine. A Protein kinase domain is found at 799–1081; it reads FSEDVVLGRG…ITEARGSSSL (283 aa). ATP contacts are provided by residues 805–813 and Lys827; that span reads LGRGACGTV. Phosphotyrosine is present on residues Tyr874 and Tyr913. Asp926 serves as the catalytic Proton acceptor. Phosphoserine is present on Ser960. Residues Tyr968 and Tyr975 each carry the phosphotyrosine modification. Thr976 is modified (phosphothreonine). The disordered stretch occupies residues 1076-1101; the sequence is RGSSSLSSSSITSETPLEEANSSKEI. Residues 1078–1088 are compositionally biased toward low complexity; the sequence is SSSLSSSSITS.

Belongs to the protein kinase superfamily. Ser/Thr protein kinase family.

It localises to the cell membrane. It carries out the reaction L-seryl-[protein] + ATP = O-phospho-L-seryl-[protein] + ADP + H(+). It catalyses the reaction L-threonyl-[protein] + ATP = O-phospho-L-threonyl-[protein] + ADP + H(+). This is Leucine-rich repeat receptor-like serine/threonine-protein kinase At1g17230 from Arabidopsis thaliana (Mouse-ear cress).